We begin with the raw amino-acid sequence, 254 residues long: Dihydroanticapsin 7-dehydrogenase (254 aa).

An NAD(+)-binding site is contributed by 9-31 (LITGGASGIGYAAVQAFLNQQAN). A substrate-binding site is contributed by Ser139. Catalysis depends on Tyr152, which acts as the Proton acceptor.

This sequence belongs to the short-chain dehydrogenases/reductases (SDR) family.

The enzyme catalyses L-dihydroanticapsin + NAD(+) = L-anticapsin + NADH + H(+). It functions in the pathway antibiotic biosynthesis; bacilysin biosynthesis. In terms of biological role, part of the bacABCDEFG operon responsible for the biosynthesis of bacilysin, an irreversible inactivator of the glutaminase domain of glucosamine synthetase. Catalyzes the dehydrogenation of the C7-hydroxyl group in the 4S-tetrahydrotyrosine (4S-H4Tyr) to yield anticapsin (epoxycyclohexanonyl-Ala). This Bacillus amyloliquefaciens (Bacillus velezensis) protein is Dihydroanticapsin 7-dehydrogenase.